The chain runs to 389 residues: Serpin B13 (389 aa).

The protein belongs to the serpin family. Ov-serpin subfamily.

It localises to the cytoplasm. Functionally, may play a role in the proliferation or differentiation of keratinocytes. This chain is Serpin B13 (Serpinb13), found in Mus musculus (Mouse).